A 350-amino-acid polypeptide reads, in one-letter code: D-alanine--D-alanine ligase (350 aa).

The region spanning 138-346 is the ATP-grasp domain; the sequence is KSAFSSAGLS…LEQLVHKLIQ (209 aa). Residue 173 to 228 coordinates ATP; that stretch reads ERELNYPCFVKPANLGSSVGISKVRSRQELEAGLEQAAALDPRLVVEQGVNAREVE. Mg(2+)-binding residues include Asp-299, Glu-313, and Asn-315.

This sequence belongs to the D-alanine--D-alanine ligase family. It depends on Mg(2+) as a cofactor. The cofactor is Mn(2+).

It localises to the cytoplasm. It carries out the reaction 2 D-alanine + ATP = D-alanyl-D-alanine + ADP + phosphate + H(+). It functions in the pathway cell wall biogenesis; peptidoglycan biosynthesis. Cell wall formation. This chain is D-alanine--D-alanine ligase, found in Synechococcus sp. (strain CC9605).